The following is a 216-amino-acid chain: Large ribosomal subunit protein uL3 (216 aa).

The disordered stretch occupies residues 137 to 157 (GASHGAHKNHRKPGSIGGAST).

The protein belongs to the universal ribosomal protein uL3 family. As to quaternary structure, part of the 50S ribosomal subunit. Forms a cluster with proteins L14 and L19.

In terms of biological role, one of the primary rRNA binding proteins, it binds directly near the 3'-end of the 23S rRNA, where it nucleates assembly of the 50S subunit. The polypeptide is Large ribosomal subunit protein uL3 (Paenarthrobacter aurescens (strain TC1)).